Here is a 377-residue protein sequence, read N- to C-terminus: DNA dC-&gt;dU-editing enzyme APOBEC-3G (377 aa).

An essential for cytoplasmic localization region spans residues 1–60; it reads MNPQIRNMVEQMEPDIFVYYFNNRPILSGRNTVWLCYEVKTKDPSGPPLDANIFQGKLYP. CMP/dCMP-type deaminase domains follow at residues 29–138 and 214–327; these read GRNT…LRIL and GQRE…LRTL. Threonine 32 bears the Phosphothreonine; by PKA mark. Zn(2+)-binding residues include histidine 65, cysteine 97, and cysteine 100. Positions 209–335 are necessary for homooligomerization; the sequence is KPWVSGQRET…TLHRDGAKIA (127 aa). An interaction with DNA region spans residues 213-215; the sequence is SGQ. Threonine 218 is modified (phosphothreonine; by PKA and CAMK2). Histidine 257 provides a ligand contact to Zn(2+). Glutamate 259 acts as the Proton donor in catalysis. Residues cysteine 287 and cysteine 290 each coordinate Zn(2+). The interaction with DNA stretch occupies residues 312–319; it reads RIYDDQGR.

It belongs to the cytidine and deoxycytidylate deaminase family. In terms of assembly, homodimer. Homooligomer. Can bind RNA to form ribonucleoprotein complexes of high-molecular-mass (HMM) or low-molecular-mass (LMM). HMM is inactive and heterogeneous in protein composition because of binding nonselectively to cellular RNAs, which in turn are associated with variety of cellular proteins. The LMM form which is enzymatically active has few or no RNAs associated. Its ability to form homooligomer is distinct from its ability to assemble into HMM. Interacts with APOBEC3B, APOBEC3F, MOV10, AGO2, EIF4E, EIF4ENIF1, DCP2 and DDX6 in an RNA-dependent manner. Interacts with AGO1, AGO3 and PKA/PRKACA. Zn(2+) is required as a cofactor.

It is found in the cytoplasm. The protein localises to the nucleus. The protein resides in the P-body. The enzyme catalyses a 2'-deoxycytidine in single-stranded DNA + H2O + H(+) = a 2'-deoxyuridine in single-stranded DNA + NH4(+). Functionally, DNA deaminase (cytidine deaminase) which acts as an inhibitor of retrovirus replication and retrotransposon mobility via deaminase-dependent and -independent mechanisms. Exhibits antiviral activity against vif-deficient: HIV-1 and simian immunodeficiency viruses (SIVs) and also simian foamy virus (SFV). After the penetration of retroviral nucleocapsids into target cells of infection and the initiation of reverse transcription, it can induce the conversion of cytosine to uracil in the minus-sense single-strand viral DNA, leading to G-to-A hypermutations in the subsequent plus-strand viral DNA. The resultant detrimental levels of mutations in the proviral genome, along with a deamination-independent mechanism that works prior to the proviral integration, together exert efficient antiretroviral effects in infected target cells. Selectively targets single-stranded DNA and does not deaminate double-stranded DNA or single- or double-stranded RNA. May inhibit the mobility of LTR retrotransposons. The polypeptide is DNA dC-&gt;dU-editing enzyme APOBEC-3G (APOBEC3G) (Chlorocebus aethiops (Green monkey)).